The primary structure comprises 660 residues: MPINEIRVQKGQRYRDAINDKKVIAVKKGDKFLDLDEIAGEDEAVQPVYLDSEDGLYILRHSAAHLLANAVTNLFPEALPNTGPVVENGFYYDFDMKPITEEDLSKIEEEMKRIVKENVPIRRMIYSKDELLKIFSKNPYKIRIINENVEGKSSVYQQGNFVDLCLGPHVPSTGYIKAFKLLSIASAVYKYDESKNLVRIYGTAFPDEKSLRRYLENLEEAKKRDHRKIIAEMDLAVFNSEWAPGFPMYTPNGQIIRKELIKYMDYVNGKNGWTDVWTPHVFKDTIWKQSGHYAKYKPNMYLFVLPDGDSYGIKPMNCPGHIAIFARRKYSYRDLPVKYSEPGTVYRYEKSGEVGGLTRPRAFTQDDGHEFIRMDQIVGEIKTLLGMVRETFTTVFGNIEMAFDLSVIDKEHPENYLLSYVCKDCGNRVEGLRGTDIECPVCHSHNMDPDFSTWDNATEQLRQAMDSMGITYKEYPGEAAFYGPKIDVHVKDALGRMWQLSTIQVDFFMPINFGLTYTNSEGKEERVVIIHRAIYGSYERFMAILLEHFAGKLPTWLTPIQTYVIPVGTANAEYARKVNKSLLDAGIRSVVDDGPDTVSKKIKMIHDQRPSYIVVVGAKEEQDNTVTVRNRAGKSKTYGMNEFLEIIKNEIEKRSVGQAF.

One can recognise a TGS domain in the interval 1 to 49 (MPINEIRVQKGQRYRDAINDKKVIAVKKGDKFLDLDEIAGEDEAVQPVY). A catalytic region spans residues 225–554 (DHRKIIAEMD…LLEHFAGKLP (330 aa)). Residues C318, H369, and H531 each contribute to the Zn(2+) site.

It belongs to the class-II aminoacyl-tRNA synthetase family. In terms of assembly, homodimer. It depends on Zn(2+) as a cofactor.

Its subcellular location is the cytoplasm. It carries out the reaction tRNA(Thr) + L-threonine + ATP = L-threonyl-tRNA(Thr) + AMP + diphosphate + H(+). Functionally, catalyzes the attachment of threonine to tRNA(Thr) in a two-step reaction: L-threonine is first activated by ATP to form Thr-AMP and then transferred to the acceptor end of tRNA(Thr). This chain is Threonine--tRNA ligase, found in Thermoplasma volcanium (strain ATCC 51530 / DSM 4299 / JCM 9571 / NBRC 15438 / GSS1).